The primary structure comprises 356 residues: Arginine kinase 1 (356 aa).

One can recognise a Phosphagen kinase N-terminal domain in the interval 6–91; that stretch reads VLAKLEEGYA…FDPIIEDYHG (86 aa). Position 64–68 (64–68) interacts with substrate; that stretch reads GVGIY. In terms of domain architecture, Phosphagen kinase C-terminal spans 119–356; it reads YVISTRVRCG…TELIKLEKSL (238 aa). ATP-binding positions include 122–126 and His-185; that span reads STRVR. Glu-225 contacts substrate. Position 229 (Arg-229) interacts with ATP. Position 271 (Cys-271) interacts with substrate. ATP is bound by residues 280–284 and 309–314; these read RASVH and RGTRGE. Substrate is bound at residue Glu-314.

Belongs to the ATP:guanido phosphotransferase family.

The enzyme catalyses L-arginine + ATP = N(omega)-phospho-L-arginine + ADP + H(+). This is Arginine kinase 1 from Drosophila melanogaster (Fruit fly).